Reading from the N-terminus, the 140-residue chain is Small ribosomal subunit protein uS12 (140 aa).

The disordered stretch occupies residues 1–28 (MPTINQLVRKSRKALEKKSTAPALQKGY). Asp102 carries the 3-methylthioaspartic acid modification. The disordered stretch occupies residues 119-140 (GVDKRRQSRSKYGAKRPKEAKK). Basic residues predominate over residues 124-140 (RQSRSKYGAKRPKEAKK).

Belongs to the universal ribosomal protein uS12 family. In terms of assembly, part of the 30S ribosomal subunit. Contacts proteins S8 and S17. May interact with IF1 in the 30S initiation complex.

With S4 and S5 plays an important role in translational accuracy. Its function is as follows. Interacts with and stabilizes bases of the 16S rRNA that are involved in tRNA selection in the A site and with the mRNA backbone. Located at the interface of the 30S and 50S subunits, it traverses the body of the 30S subunit contacting proteins on the other side and probably holding the rRNA structure together. The combined cluster of proteins S8, S12 and S17 appears to hold together the shoulder and platform of the 30S subunit. The sequence is that of Small ribosomal subunit protein uS12 from Clostridioides difficile (strain 630) (Peptoclostridium difficile).